A 672-amino-acid chain; its full sequence is UvrABC system protein B (672 aa).

The 156-residue stretch at 26-181 (AGLEDGLAYQ…ILQRLAELQY (156 aa)) folds into the Helicase ATP-binding domain. An ATP-binding site is contributed by 39–46 (GVTGSGKT). The Beta-hairpin signature appears at 92–115 (YYDYYQPEAYVPSSDTYIEKDASI). In terms of domain architecture, Helicase C-terminal spans 430-592 (QVDDLLSEIK…ITPKSIQKAV (163 aa)). A UVR domain is found at 631–666 (AKELRKLEEQMYHHARNLEFEEAAAVRDKIQHIRKG).

It belongs to the UvrB family. As to quaternary structure, forms a heterotetramer with UvrA during the search for lesions. Interacts with UvrC in an incision complex.

It localises to the cytoplasm. Its function is as follows. The UvrABC repair system catalyzes the recognition and processing of DNA lesions. A damage recognition complex composed of 2 UvrA and 2 UvrB subunits scans DNA for abnormalities. Upon binding of the UvrA(2)B(2) complex to a putative damaged site, the DNA wraps around one UvrB monomer. DNA wrap is dependent on ATP binding by UvrB and probably causes local melting of the DNA helix, facilitating insertion of UvrB beta-hairpin between the DNA strands. Then UvrB probes one DNA strand for the presence of a lesion. If a lesion is found the UvrA subunits dissociate and the UvrB-DNA preincision complex is formed. This complex is subsequently bound by UvrC and the second UvrB is released. If no lesion is found, the DNA wraps around the other UvrB subunit that will check the other stand for damage. This chain is UvrABC system protein B, found in Coxiella burnetii (strain Dugway 5J108-111).